The sequence spans 74 residues: RNA-binding protein Hfq (74 aa).

The region spanning 9–69 (DQFLNQLRKE…ISTFVPQKNV (61 aa)) is the Sm domain.

Belongs to the Hfq family. As to quaternary structure, homohexamer.

Functionally, RNA chaperone that binds small regulatory RNA (sRNAs) and mRNAs to facilitate mRNA translational regulation in response to envelope stress, environmental stress and changes in metabolite concentrations. Also binds with high specificity to tRNAs. This chain is RNA-binding protein Hfq, found in Bacillus cereus (strain Q1).